Consider the following 278-residue polypeptide: Bifunctional protein FolD (278 aa).

NADP(+) is bound by residues Gly165 to Ser167, Ser190, and Thr231.

Belongs to the tetrahydrofolate dehydrogenase/cyclohydrolase family. Homodimer.

The catalysed reaction is (6R)-5,10-methylene-5,6,7,8-tetrahydrofolate + NADP(+) = (6R)-5,10-methenyltetrahydrofolate + NADPH. The enzyme catalyses (6R)-5,10-methenyltetrahydrofolate + H2O = (6R)-10-formyltetrahydrofolate + H(+). It functions in the pathway one-carbon metabolism; tetrahydrofolate interconversion. Catalyzes the oxidation of 5,10-methylenetetrahydrofolate to 5,10-methenyltetrahydrofolate and then the hydrolysis of 5,10-methenyltetrahydrofolate to 10-formyltetrahydrofolate. The chain is Bifunctional protein FolD from Clostridium novyi (strain NT).